The chain runs to 139 residues: MTSSRLSLAADARDSILSHAREGAAGDPPAEVCGVLAGDSDARTVTAAHPVSNVAAEPRVAYELDPEETVSILEAIESAGDDAVGFYHSHPESDPVPSATDRERASWPGYVYLICSPDGRMTAHEWTGDEFRELSVAVE.

In terms of domain architecture, MPN spans 6–139 (LSLAADARDS…EFRELSVAVE (134 aa)). Catalysis depends on Glu-31, which acts as the Proton donor/acceptor. His-88, His-90, and Asp-101 together coordinate Zn(2+). The JAMM motif motif lies at 88 to 101 (HSHPESDPVPSATD).

It belongs to the peptidase M67B family. Monomer. The cofactor is Zn(2+).

It catalyses the reaction an N(6)-[small archaeal modifier protein]-[protein]-L-lysine + H2O = a [protein]-L-lysine + a [small archaeal modifier protein].. Its activity is regulated as follows. Inhibited by EDTA and N-ethylmaleimide (NEM) in vitro. In terms of biological role, metalloprotease that displays desampylase (DSAMP) activity, cleaving ubiquitin-like small archaeal modifier proteins (SAMP1, SAMP2 and SAMP3) from protein conjugates (isopeptide- and linear-linked). Thus, likely regulates sampylation and the pools of 'free' SAMP available for protein modification. Functions as a specific and not a general protease since it is unable to hydrolyze a variety of unmodified proteins otherwise hydrolyzed by proteinase K. The chain is Desampylase from Haloferax volcanii (strain ATCC 29605 / DSM 3757 / JCM 8879 / NBRC 14742 / NCIMB 2012 / VKM B-1768 / DS2) (Halobacterium volcanii).